A 261-amino-acid chain; its full sequence is MNCIIKTESEIKKMKVSGKIAAEVLEMIENYIKPNISTEEINNICHNFIIKKKAVSACLGYHGFPKSICISVNDVVCHGIPNKNQILKSGDIVNIDVTIIKKNYHADTSKMFLVGQTNILSQRLCKIAQESLYKSLNILKPGIPLYKIGEVIQNYVENNNFSVVKEYCGHGIGRAFHEEPYVLHYKNKSHVILEKGMIFTIEPMINAGSHEVKCMKDGWTVKTKDHSLSAQYEHTVLITENGCDILTWQKNEKIPSKFINK.

His78 is a substrate binding site. A divalent metal cation is bound by residues Asp96, Asp107, and His170. Substrate is bound at residue His177. A divalent metal cation-binding residues include Glu202 and Glu233.

Belongs to the peptidase M24A family. Methionine aminopeptidase type 1 subfamily. In terms of assembly, monomer. Co(2+) serves as cofactor. It depends on Zn(2+) as a cofactor. The cofactor is Mn(2+). Fe(2+) is required as a cofactor.

It carries out the reaction Release of N-terminal amino acids, preferentially methionine, from peptides and arylamides.. Functionally, removes the N-terminal methionine from nascent proteins. The N-terminal methionine is often cleaved when the second residue in the primary sequence is small and uncharged (Met-Ala-, Cys, Gly, Pro, Ser, Thr, or Val). Requires deformylation of the N(alpha)-formylated initiator methionine before it can be hydrolyzed. The polypeptide is Methionine aminopeptidase (Buchnera aphidicola subsp. Schizaphis graminum (strain Sg)).